The following is a 354-amino-acid chain: Maleylacetate reductase 1 (354 aa).

This sequence belongs to the iron-containing alcohol dehydrogenase family. Homodimer.

It catalyses the reaction 3-oxoadipate + NAD(+) = maleylacetate + NADH + H(+). It carries out the reaction 3-oxoadipate + NADP(+) = maleylacetate + NADPH + H(+). It participates in aromatic compound metabolism; 3-chlorocatechol degradation. The chain is Maleylacetate reductase 1 (tfdFI) from Cupriavidus pinatubonensis (strain JMP 134 / LMG 1197) (Cupriavidus necator (strain JMP 134)).